The chain runs to 339 residues: MARGGGKSGSLKDKLDGNELDLSLCGLSEVPVRELAALPKATVLDLSCNSLVSLPSDFCSLTHLVKLDLSKNRLQQLPVDFGRLVSLQHLDLLNNRLVTLPVSFAQLKLSLHHSPVEILSRLLGTPSSLLVFHSFHSWENQNLKWLDLKDNPLDPVLAKVAGDCLDEKQCKQAAVRVLQHMKVIQSEQDRERQRKLQAEREMEKKREAEQRAREAQERELRKREKAEEKERRRREYDAQRAAKQEMEKKTKKETVQTRKLASSSRPPQPARHKHSWSRSVLRALLLVLLCILCTLAVCKLTELQHQPLCVSVNTLYEDVVAAVQNHKTLQNMLQQNSQQ.

The Cytoplasmic segment spans residues 1–282; it reads MARGGGKSGS…KHSWSRSVLR (282 aa). LRR repeat units follow at residues 10–31, 40–61, 63–84, and 86–107; these read SLKDKLDGNELDLSLCGLSEVP, KATVLDLSCNSLVSLPSDFCSL, HLVKLDLSKNRLQQLPVDFGRL, and SLQHLDLLNNRLVTLPVSFAQL. Residues 181 to 254 adopt a coiled-coil conformation; that stretch reads MKVIQSEQDR…EMEKKTKKET (74 aa). Residues 186-275 form a disordered region; that stretch reads SEQDRERQRK…PPQPARHKHS (90 aa). Residues 187–256 are compositionally biased toward basic and acidic residues; sequence EQDRERQRKL…EKKTKKETVQ (70 aa). The chain crosses the membrane as a helical span at residues 283–300; the sequence is ALLLVLLCILCTLAVCKL. At 301–339 the chain is on the lumenal side; sequence TELQHQPLCVSVNTLYEDVVAAVQNHKTLQNMLQQNSQQ.

As to quaternary structure, interacts with SGO1.

Its subcellular location is the microsome membrane. It is found in the endoplasmic reticulum membrane. The protein resides in the nucleus envelope. Functionally, required for nuclear import of FGF1. This chain is Leucine-rich repeat-containing protein 59 (LRRC59), found in Gallus gallus (Chicken).